A 168-amino-acid chain; its full sequence is Phosphopantetheine adenylyltransferase (168 aa).

Thr-9 serves as a coordination point for substrate. Residues 9 to 10 (TF) and His-17 contribute to the ATP site. Substrate contacts are provided by Lys-41, Leu-73, and Arg-87. Residues 88–90 (GLR), Glu-98, and 123–129 (YQFISGT) contribute to the ATP site.

It belongs to the bacterial CoaD family. In terms of assembly, homohexamer. Requires Mg(2+) as cofactor.

Its subcellular location is the cytoplasm. The catalysed reaction is (R)-4'-phosphopantetheine + ATP + H(+) = 3'-dephospho-CoA + diphosphate. The protein operates within cofactor biosynthesis; coenzyme A biosynthesis; CoA from (R)-pantothenate: step 4/5. Functionally, reversibly transfers an adenylyl group from ATP to 4'-phosphopantetheine, yielding dephospho-CoA (dPCoA) and pyrophosphate. In Paraburkholderia phymatum (strain DSM 17167 / CIP 108236 / LMG 21445 / STM815) (Burkholderia phymatum), this protein is Phosphopantetheine adenylyltransferase.